Reading from the N-terminus, the 351-residue chain is Photosystem II D2 protein (351 aa).

A helical transmembrane segment spans residues cysteine 39–threonine 59. Histidine 116 provides a ligand contact to chlorophyll a. The chain crosses the membrane as a helical span at residues glycine 123 to proline 139. Positions 128 and 141 each coordinate pheophytin a. The helical transmembrane segment at valine 151–alanine 164 threads the bilayer. Residue histidine 196 participates in chlorophyll a binding. A helical membrane pass occupies residues glycine 206–aspartate 226. Positions 213 and 260 each coordinate a plastoquinone. Histidine 213 serves as a coordination point for Fe cation. Histidine 267 contacts Fe cation. Residues glycine 277–arginine 293 form a helical membrane-spanning segment.

It belongs to the reaction center PufL/M/PsbA/D family. In terms of assembly, PSII is composed of 1 copy each of membrane proteins PsbA, PsbB, PsbC, PsbD, PsbE, PsbF, PsbH, PsbI, PsbJ, PsbK, PsbL, PsbM, PsbT, PsbX, PsbY, PsbZ, Psb30/Ycf12, at least 3 peripheral proteins of the oxygen-evolving complex and a large number of cofactors. It forms dimeric complexes. The D1/D2 heterodimer binds P680, chlorophylls that are the primary electron donor of PSII, and subsequent electron acceptors. It shares a non-heme iron and each subunit binds pheophytin, quinone, additional chlorophylls, carotenoids and lipids. There is also a Cl(-1) ion associated with D1 and D2, which is required for oxygen evolution. The PSII complex binds additional chlorophylls, carotenoids and specific lipids. is required as a cofactor.

The protein resides in the plastid. It localises to the chloroplast thylakoid membrane. The catalysed reaction is 2 a plastoquinone + 4 hnu + 2 H2O = 2 a plastoquinol + O2. Functionally, photosystem II (PSII) is a light-driven water:plastoquinone oxidoreductase that uses light energy to abstract electrons from H(2)O, generating O(2) and a proton gradient subsequently used for ATP formation. It consists of a core antenna complex that captures photons, and an electron transfer chain that converts photonic excitation into a charge separation. The D1/D2 (PsbA/PsbD) reaction center heterodimer binds P680, the primary electron donor of PSII as well as several subsequent electron acceptors. D2 is needed for assembly of a stable PSII complex. The sequence is that of Photosystem II D2 protein from Pyropia yezoensis (Susabi-nori).